We begin with the raw amino-acid sequence, 321 residues long: Glucokinase (321 aa).

Position 8-13 (G8–T13) interacts with ATP.

The protein belongs to the bacterial glucokinase family.

It localises to the cytoplasm. It carries out the reaction D-glucose + ATP = D-glucose 6-phosphate + ADP + H(+). This is Glucokinase from Salmonella typhi.